The following is a 193-amino-acid chain: uncharacterized protein (193 aa).

Positions 1–22 (MAVQKNVIKGILAGTFALMLSG) are cleaved as a signal peptide. Residue cysteine 23 is the site of N-palmitoyl cysteine attachment. Residue cysteine 23 is the site of S-diacylglycerol cysteine attachment.

The protein resides in the cell membrane. This is an uncharacterized protein from Escherichia coli (strain K12).